Reading from the N-terminus, the 271-residue chain is Acetyl-coenzyme A carboxylase carboxyl transferase subunit alpha (271 aa).

One can recognise a CoA carboxyltransferase C-terminal domain in the interval 1–247 (MSRELIRTAD…KKTILEALGE (247 aa)).

The protein belongs to the AccA family. Acetyl-CoA carboxylase is a heterohexamer composed of biotin carboxyl carrier protein (AccB), biotin carboxylase (AccC) and two subunits each of ACCase subunit alpha (AccA) and ACCase subunit beta (AccD).

It localises to the cytoplasm. The catalysed reaction is N(6)-carboxybiotinyl-L-lysyl-[protein] + acetyl-CoA = N(6)-biotinyl-L-lysyl-[protein] + malonyl-CoA. It participates in lipid metabolism; malonyl-CoA biosynthesis; malonyl-CoA from acetyl-CoA: step 1/1. Functionally, component of the acetyl coenzyme A carboxylase (ACC) complex. First, biotin carboxylase catalyzes the carboxylation of biotin on its carrier protein (BCCP) and then the CO(2) group is transferred by the carboxyltransferase to acetyl-CoA to form malonyl-CoA. This Clostridium perfringens (strain 13 / Type A) protein is Acetyl-coenzyme A carboxylase carboxyl transferase subunit alpha.